We begin with the raw amino-acid sequence, 337 residues long: Trace amine-associated receptor 5 (337 aa).

Topologically, residues 1 to 38 (MRAVLLPGSGEQPAAFCYQVNGSCPRTVHPLAIRVLIY) are extracellular. Residue asparagine 21 is glycosylated (N-linked (GlcNAc...) asparagine). 2 cysteine pairs are disulfide-bonded: cysteine 24–cysteine 188 and cysteine 99–cysteine 192. A helical transmembrane segment spans residues 39–59 (LACAVGMLITVLGNLFVVFAV). Residues 60–70 (SYFKVLHTPTN) are Cytoplasmic-facing. A helical membrane pass occupies residues 71-91 (FLLLSLALADMLLGLLVLPLS). The Extracellular portion of the chain corresponds to 92-109 (TVRSVESCWFFGDFLCRL). Residues 110–130 (HTYLDTLFCLTSIFHLCFISI) form a helical membrane-spanning segment. Topologically, residues 131–154 (DRHCAICDPLLYPSKFTVRIALRY) are cytoplasmic. Residues 155 to 175 (IAAGWGIPAAYTAFFLYTDVV) form a helical membrane-spanning segment. Residues 176–189 (ERALSQWLEEMPCV) form an extracellular Loop 2 (ECL2) region. The Extracellular portion of the chain corresponds to 176–204 (ERALSQWLEEMPCVGSCQLLFNKFWGWLN). A helical membrane pass occupies residues 205–225 (FPAFFIPCLIMISLYLKIFVV). Topologically, residues 226–253 (ATRQAQQIRTLSQSLSGAVKRERKAAKT) are cytoplasmic. Residues 254–274 (LGIAVGIYLVCWLPFTVDTLV) traverse the membrane as a helical segment. Residues 275–284 (DSLLNFVTPP) lie on the Extracellular side of the membrane. Residues 285 to 307 (LVFDIFIWFAYFNSACNPIIYVF) form a helical membrane-spanning segment. At 308-337 (SYRWFRKALKLLLSREILSPRTQTADLFHD) the chain is on the cytoplasmic side.

It belongs to the G-protein coupled receptor 1 family.

The protein localises to the cell membrane. In terms of biological role, olfactory receptor specific for trimethylamine, a trace amine enriched in the urine of male rats, playing a role in social behavior. Also activated by N-methylpiperidine. Trimethylamine is present at high concentration in the urine of male after puberty and acts as an attractant. Trimethylamine-binding causes a conformation change that triggers signaling via G(s)-class of G alpha proteins (GNAL or GNAS). Also required to provide olfactory input into limbic brain areas to regulate emotional behaviors likely via modulation of the serotonin system. The polypeptide is Trace amine-associated receptor 5 (Rattus norvegicus (Rat)).